The following is a 512-amino-acid chain: 2,3-bisphosphoglycerate-independent phosphoglycerate mutase (512 aa).

2 residues coordinate Mn(2+): aspartate 14 and serine 64. The active-site Phosphoserine intermediate is the serine 64. Substrate is bound by residues histidine 125, 155 to 156 (RD), arginine 187, arginine 193, 259 to 262 (RADR), and lysine 332. Aspartate 399, histidine 403, aspartate 440, histidine 441, and histidine 459 together coordinate Mn(2+).

Belongs to the BPG-independent phosphoglycerate mutase family. In terms of assembly, monomer. It depends on Mn(2+) as a cofactor.

It carries out the reaction (2R)-2-phosphoglycerate = (2R)-3-phosphoglycerate. Its pathway is carbohydrate degradation; glycolysis; pyruvate from D-glyceraldehyde 3-phosphate: step 3/5. Its function is as follows. Catalyzes the interconversion of 2-phosphoglycerate and 3-phosphoglycerate. This is 2,3-bisphosphoglycerate-independent phosphoglycerate mutase from Vesicomyosocius okutanii subsp. Calyptogena okutanii (strain HA).